The primary structure comprises 210 residues: Vacuolar protein sorting-associated protein 28 homolog 2 (210 aa).

The VPS28 N-terminal domain occupies 1-99; the sequence is MMEVKLWNDK…VTSGLPATVE (99 aa). One can recognise a VPS28 C-terminal domain in the interval 109–205; it reads SNSASIVAEC…SSYNSFMAAL (97 aa).

It belongs to the VPS28 family. As to quaternary structure, component of the endosomal sorting required for transport complex I (ESCRT-I), composed of ELC, VPS28 and VPS37. Interacts with ELC.

It is found in the endosome. In terms of biological role, component of the ESCRT-I complex (endosomal sorting complex required for transport I), a regulator of vesicular trafficking process. Required for the sorting of endocytic ubiquitinated cargos into multivesicular bodies (MVBs). Mediates the association to the ESCRT-0 complex. This Arabidopsis thaliana (Mouse-ear cress) protein is Vacuolar protein sorting-associated protein 28 homolog 2 (VPS28-2).